We begin with the raw amino-acid sequence, 354 residues long: UDP-2,3-diacetamido-2,3-dideoxy-D-glucuronate 2-epimerase (354 aa).

The protein belongs to the UDP-N-acetylglucosamine 2-epimerase family.

It catalyses the reaction UDP-2,3-diacetamido-2,3-dideoxy-alpha-D-glucuronate = UDP-2,3-diacetamido-2,3-dideoxy-alpha-D-mannuronate. It functions in the pathway bacterial outer membrane biogenesis; LPS O-antigen biosynthesis. Functionally, plays a role in the biosynthesis of B-band O antigen for serotype O5. Catalyzes the epimerization of UDP-2,3-diacetamido-2,3-dideoxy-alpha-D-glucuronic acid (UDP-alpha-D-GlcNAc3NAcA) to UDP-2,3-diacetamido-2,3-dideoxy-alpha-D-mannuronic acid (UDP-alpha-D-ManNAc3NAcA). Exhibits high specificity towards the substrate as UDP-alpha-D-GlcNAc, UDP-alpha-D-GlcNAcA (UDP-2-acetamido-2-deoxy-alpha-D-glucuronic acid) and UDP-alpha-D-GlcNAc3NAc (UDP-2,3-diacetamido-2,3-dideoxy-alpha-D-glucose) cannot act as substrates. The chain is UDP-2,3-diacetamido-2,3-dideoxy-D-glucuronate 2-epimerase from Pseudomonas aeruginosa (strain ATCC 15692 / DSM 22644 / CIP 104116 / JCM 14847 / LMG 12228 / 1C / PRS 101 / PAO1).